The chain runs to 122 residues: MIQTQTRLAVADNSGAKELMCIKVLGGSGRKTANIGDVIVCSVKSATPGGVVKKGQVVKAVVVRTVSGVRRNDGSYIRFDENAAVVIKDDQSPRGTRIFGPVARELRDKDFMKIISLAPEVI.

Belongs to the universal ribosomal protein uL14 family. In terms of assembly, part of the 50S ribosomal subunit. Forms a cluster with proteins L3 and L19. In the 70S ribosome, L14 and L19 interact and together make contacts with the 16S rRNA in bridges B5 and B8.

Functionally, binds to 23S rRNA. Forms part of two intersubunit bridges in the 70S ribosome. The sequence is that of Large ribosomal subunit protein uL14 from Brevibacillus brevis (strain 47 / JCM 6285 / NBRC 100599).